Here is a 179-residue protein sequence, read N- to C-terminus: MSRIGYKTIVIPEGVTVTRDEDVITVKGPKGELSETFSPDVAMNVNGNEINFEPTGKYDNKMCALHGTQRANLANMIEGVEKGFNKTLKLVGVGYRTQLKGSDLILNVGYSNPVDVKVPEDIDVKVPDNTTIEIAGINKQHVGDFAAKVREIRSPEPYKGKGIRYENEHITLREGKTGK.

This sequence belongs to the universal ribosomal protein uL6 family. Part of the 50S ribosomal subunit.

Its function is as follows. This protein binds to the 23S rRNA, and is important in its secondary structure. It is located near the subunit interface in the base of the L7/L12 stalk, and near the tRNA binding site of the peptidyltransferase center. This Fructilactobacillus sanfranciscensis (Lactobacillus sanfranciscensis) protein is Large ribosomal subunit protein uL6.